Reading from the N-terminus, the 365-residue chain is Peptide chain release factor 2 (365 aa).

Residue Gln-252 is modified to N5-methylglutamine.

It belongs to the prokaryotic/mitochondrial release factor family. Post-translationally, methylated by PrmC. Methylation increases the termination efficiency of RF2.

It is found in the cytoplasm. Its function is as follows. Peptide chain release factor 2 directs the termination of translation in response to the peptide chain termination codons UGA and UAA. This Escherichia coli O9:H4 (strain HS) protein is Peptide chain release factor 2.